Reading from the N-terminus, the 93-residue chain is YcgL domain-containing protein KPN78578_22820 (93 aa).

Residues 1-85 (MFCVIYRSTK…PSENLLKKHL (85 aa)) form the YcgL domain.

This chain is YcgL domain-containing protein KPN78578_22820, found in Klebsiella pneumoniae subsp. pneumoniae (strain ATCC 700721 / MGH 78578).